A 1844-amino-acid polypeptide reads, in one-letter code: MVGVLAMAAAAAPPPVKDCEIEPCKKRKKDDDTSTCKTITKYLSPLGKTRDRVFAPPKPSNILDYFRKTSPTNEKTQLGKECKIKSPESVPVDSNKDCTTPLEMFSNVEFKKKRKRVNLSHQLNNIKTENEAPIEISSDDSKEDYSLNNDFVESSTSVLRYKKQVEVLAENIQDTKSQPNTMTSLQNSKKVNPKQGTTKNDFKKLRKRKCRDVVDLSESLPLAEELNLLKKDGKDTKQMENTTSHANSRDNVTEAAQLNDSIITVSYEEFLKSHKENKVEEIPDSTMSICVPSETVDEIVKSGYISESENSEISQQVRFKTVTVLAQVHPIPPKKTGKIPRIFLKQKQFEMENSLSDPENEQTVQKRKSNVVIQEEELELAVLEAGSSEAVKPKCTLEERQQFMKAFRQPASDALKNGVKKSSDKQKDLNEKCLYEVGRDDNSKKIMENSGIQMVSKNGNLQLHTDKGSFLKEKNKKLKKKNKKTLDTGAIPGKNREGNTQKKETTFFLKEKQYQNRMSLRQRKTEFFKSSTLFNNESLVYEDIANDDLLKVSSLCNNNKLSRKTSIPVKDIKLTQSKAESEASLLNVSTPKSTRRSGRISSTPTTETIRGIDSDDVQDNSQLKASTQKAANLSEKHSLYTAELITVPFDSESPIRMKFTRISTPKKSKKKSNKRSEKSEATDGGFTSQIRKASNTSKNISKAKQLIEKAKALHISRSKVTEEIAIPLRRSSRHQTLPERKKLSETEDSVIIIDSSPTALKHPEKNQKKLQCLNDVLGKKLNTSTKNVPGKMKVAPLFLVRKAQKAADPVPSFDESSQDTSEKSQDCDVQCKAKRDFLMSGLPDLLKRQIAKKAAALDVYNAVSTSFQRVVHVQQKDDGCCLWHLKPPSCPLLTKFKELNTKVIDLSKCGIALGEFSTLNSKLKSGNSAAVFMRTRKEFTEEVRNLLLEEIRWSNPEFSLKKYFPLLLKKQIEHQVLSSECHSKQELEADVSHKETKRKLVEAENSKSKRKKPNEYSKNLEKTNRKSEELSKRNNSSGIKLDSSKDSGTEDMLWTEKYQPQTASELIGNELAIKKLHSWLKDWKRRAELEERQNLKGKRDEKHEDFSGGIDFKGSSDDEEESRLCNTVLITGPTGVGKTAAVYACAQELGFKIFEVNASSQRSGRQILSQLKEATQSHQVDKQGVNSQKPCFFNSYYIGKSPKKISSPKKVVTSPRKVPPPSPKSSGPKRALPPKTLANYFKVSPKPKNNEEIGMLLENNKGIKNSFEQKQITQTKSTNATNSNVKDVGAEEPSRKNATSLILFEEVDVIFDEDAGFLNAIKTFMATTKRPVILTTSDPTFSLMFDGCFEEIKFSTPSLLNVASYLQMICLTENFRTDVKDFVTLLTANTCDIRKSILYLQFWIRSGGGVLEERPLTLYRGNSRNVQLVCSEHGLDNKIYPKNTKKKRVDLPKCDSGCAETLFGLKNIFSPSEDLFSFLKHKITMKEEWHKFIQLLTEFQMRNVDFLYSNLEFILPLPVDTIPETKNFCGPSVTVDASAATKSMNCLARKHSEREQPLKKSQKKKQKKTLVILDDSDLFDTDLDFPDQSISLSSVSSSSNAEESKTGDEESKARDKGNNPETKKSIPCPPKTTAGKKCSALVSHCLNSLSEFMDNMSFLDALLTDVREQNKYGRNDFSWTNGKVTSGLCDEFSLESNDGWTSQSSGELKAAAEALSFTKCSSAISKALETLNSCKKLGRDPTNDLTFYVSQKRNNVYFSQSAANLDNAWKRISVIKSVFSSRSLLYVGNRQASIIEYLPTLRNICKTEKLKEQGKSKRRFLHYFEGIHLDIPKETVNTLAADFP.

The residue at position 44 (serine 44) is a Phosphoserine. A Glycyl lysine isopeptide (Lys-Gly) (interchain with G-Cter in SUMO2) cross-link involves residue lysine 127. Positions 178–199 (QPNTMTSLQNSKKVNPKQGTTK) are enriched in polar residues. The interval 178–204 (QPNTMTSLQNSKKVNPKQGTTKNDFKK) is disordered. Serine 219, serine 306, serine 311, serine 354, and serine 369 each carry phosphoserine. The interaction with WDR48 stretch occupies residues 368–384 (KSNVVIQEEELELAVLE). Disordered regions lie at residues 477–499 (KLKK…REGN), 580–623 (ESEA…NSQL), and 658–700 (KFTR…SKNI). Composition is skewed to polar residues over residues 580–592 (ESEA…STPK) and 599–608 (RISSTPTTET). Serine 602, serine 614, and serine 621 each carry phosphoserine. A compositionally biased stretch (basic residues) spans 664–673 (TPKKSKKKSN). Polar residues predominate over residues 685–700 (GFTSQIRKASNTSKNI). At serine 817 the chain carries Phosphoserine. 2 stretches are compositionally biased toward basic and acidic residues: residues 987–1032 (LEAD…ELSK) and 1092–1106 (RQNL…HEDF). Disordered regions lie at residues 987-1047 (LEAD…SKDS) and 1092-1118 (RQNL…SSDD). Residue serine 1116 is modified to Phosphoserine. 1132–1139 (GPTGVGKT) contacts ATP. 2 disordered regions span residues 1203 to 1235 (KKIS…LPPK) and 1272 to 1292 (ITQT…GAEE). A compositionally biased stretch (polar residues) spans 1272-1285 (ITQTKSTNATNSNV). An LXCXE motif motif is present at residues 1428–1432 (LVCSE). A disordered region spans residues 1591–1635 (SLSSVSSSSNAEESKTGDEESKARDKGNNPETKKSIPCPPKTTAG). Residues 1602-1624 (EESKTGDEESKARDKGNNPETKK) show a composition bias toward basic and acidic residues. An interaction with RAD51 and RFC5 region spans residues 1630-1719 (PKTTAGKKCS…AAAEALSFTK (90 aa)).

This sequence belongs to the AAA ATPase family. As to quaternary structure, component of a heteropentameric replication factor ATAD5 RFC-like complex composed of one large subunit (ATAD5) and four small subunits (RFC2, RFC3, RFC4 and RFC5). Within the ATAD5 RFC-like complex, interacts with RFC2, RFC4 and RFC5. Within the ATAD5 RFC-like complex, interacts directly via-N terminal with RAD51; the interactions is enhanced under replication stress. Interacts with RB1 predominantly in G1 phase via its LXCXE motif. Interacts with RAD9A in growing cells. The interaction with RAD9A is reduced after exposure to DNA replication-inhibiting agents. Interacts with BRD4. Interacts with PCNA. Interacts with deubiquitinating enzyme USP1, and its associated factor, WDR48. ATR may stimulate the RAD9A dissociation.

The protein resides in the nucleus. In terms of biological role, has an important role in DNA replication and in maintaining genome integrity during replication stress. Involved in a RAD9A-related damage checkpoint, a pathway that is important in determining whether DNA damage is compatible with cell survival or whether it requires cell elimination by apoptosis. Modulates the RAD9A interaction with BCL2 and thereby induces DNA damage-induced apoptosis. Promotes PCNA deubiquitination by recruiting the ubiquitin-specific protease 1 (USP1) and WDR48 thereby down-regulating the error-prone damage bypass pathway. As component of the ATAD5 RFC-like complex, regulates the function of the DNA polymerase processivity factor PCNA by unloading the ring-shaped PCNA homotrimer from DNA after replication during the S phase of the cell cycle. This seems to be dependent on its ATPase activity. Plays important roles in restarting stalled replication forks under replication stress, by unloading the PCNA homotrimer from DNA and recruiting RAD51 possibly through an ATR-dependent manner. Ultimately this enables replication fork regression, breakage, and eventual fork restart. Both the PCNA unloading activity and the interaction with WDR48 are required to efficiently recruit RAD51 to stalled replication forks. Promotes the generation of MUS81-mediated single-stranded DNA-associated breaks in response to replication stress, which is an alternative pathway to restart stalled/regressed replication forks. This chain is ATPase family AAA domain-containing protein 5, found in Homo sapiens (Human).